The following is a 410-amino-acid chain: Putative competence-damage inducible protein (410 aa).

It belongs to the CinA family.

The protein is Putative competence-damage inducible protein of Finegoldia magna (strain ATCC 29328 / DSM 20472 / WAL 2508) (Peptostreptococcus magnus).